The primary structure comprises 151 residues: D-aminoacyl-tRNA deacylase (151 aa).

The Gly-cisPro motif, important for rejection of L-amino acids motif lies at 139 to 140 (GP).

It belongs to the DTD family. As to quaternary structure, homodimer.

Its subcellular location is the cytoplasm. It catalyses the reaction glycyl-tRNA(Ala) + H2O = tRNA(Ala) + glycine + H(+). It carries out the reaction a D-aminoacyl-tRNA + H2O = a tRNA + a D-alpha-amino acid + H(+). In terms of biological role, an aminoacyl-tRNA editing enzyme that deacylates mischarged D-aminoacyl-tRNAs. Also deacylates mischarged glycyl-tRNA(Ala), protecting cells against glycine mischarging by AlaRS. Acts via tRNA-based rather than protein-based catalysis; rejects L-amino acids rather than detecting D-amino acids in the active site. By recycling D-aminoacyl-tRNA to D-amino acids and free tRNA molecules, this enzyme counteracts the toxicity associated with the formation of D-aminoacyl-tRNA entities in vivo and helps enforce protein L-homochirality. This chain is D-aminoacyl-tRNA deacylase, found in Symbiobacterium thermophilum (strain DSM 24528 / JCM 14929 / IAM 14863 / T).